The chain runs to 358 residues: Photosystem II protein D1 2 (358 aa).

Helical transmembrane passes span 28–45, 117–132, and 141–155; these read YVGW…AATI, HFLI…QWEL, and WICV…AAMA. H117 provides a ligand contact to chlorophyll a. Y125 lines the pheophytin a pocket. [CaMn4O5] cluster is bound by residues D169 and E188. Residues 196–217 traverse the membrane as a helical segment; sequence FHMLGVAGVFGGSLFSAMHGSL. H197 is a binding site for chlorophyll a. A quinone contacts are provided by residues H214 and 263-264; that span reads SF. Position 214 (H214) interacts with Fe cation. H271 lines the Fe cation pocket. Residues 273–287 traverse the membrane as a helical segment; that stretch reads FLGAWPVVGIWFTSM. [CaMn4O5] cluster is bound by residues H331, E332, D341, and A343. A propeptide spanning residues 344–358 is cleaved from the precursor; that stretch reads TVESTPVALQAPAIG.

This sequence belongs to the reaction center PufL/M/PsbA/D family. As to quaternary structure, PSII is composed of 1 copy each of membrane proteins PsbA, PsbB, PsbC, PsbD, PsbE, PsbF, PsbH, PsbI, PsbJ, PsbK, PsbL, PsbM, PsbT, PsbX, PsbY, PsbZ, Psb30/Ycf12, peripheral proteins PsbO, CyanoQ (PsbQ), PsbU, PsbV and a large number of cofactors. It forms dimeric complexes. The D1/D2 heterodimer binds P680, chlorophylls that are the primary electron donor of PSII, and subsequent electron acceptors. It shares a non-heme iron and each subunit binds pheophytin, quinone, additional chlorophylls, carotenoids and lipids. D1 provides most of the ligands for the Mn4-Ca-O5 cluster of the oxygen-evolving complex (OEC). There is also a Cl(-1) ion associated with D1 and D2, which is required for oxygen evolution. The PSII complex binds additional chlorophylls, carotenoids and specific lipids. serves as cofactor. Post-translationally, tyr-160 forms a radical intermediate that is referred to as redox-active TyrZ, YZ or Y-Z. C-terminally processed by CtpA; processing is essential to allow assembly of the oxygen-evolving complex and thus photosynthetic growth.

The protein resides in the cellular thylakoid membrane. The catalysed reaction is 2 a plastoquinone + 4 hnu + 2 H2O = 2 a plastoquinol + O2. Photosystem II (PSII) is a light-driven water:plastoquinone oxidoreductase that uses light energy to abstract electrons from H(2)O, generating O(2) and a proton gradient subsequently used for ATP formation. It consists of a core antenna complex that captures photons, and an electron transfer chain that converts photonic excitation into a charge separation. The D1/D2 (PsbA/PsbD) reaction center heterodimer binds P680, the primary electron donor of PSII as well as several subsequent electron acceptors. This Parasynechococcus marenigrum (strain WH8102) protein is Photosystem II protein D1 2.